Consider the following 162-residue polypeptide: Single-stranded DNA-binding protein 1 (162 aa).

The SSB domain maps to 5 to 110 (LNKVMLIGHL…IVCTDMQMLG (106 aa)). Residues 110 to 162 (GAKDSGGGTSDASYSQNRPSYSRPSRPEPSSGNYGASPSSGGAQEFEKDDLPF) are disordered. A compositionally biased stretch (low complexity) spans 122 to 140 (SYSQNRPSYSRPSRPEPSS). Over residues 141 to 151 (GNYGASPSSGG) the composition is skewed to polar residues.

Homotetramer.

This Chlorobaculum tepidum (strain ATCC 49652 / DSM 12025 / NBRC 103806 / TLS) (Chlorobium tepidum) protein is Single-stranded DNA-binding protein 1 (ssb1).